The chain runs to 168 residues: Variant surface antigen D (168 aa).

Positions 1-29 are cleaved as a signal peptide; it reads MKKSIFSKKLLVSFGSLVTLAAIPLIAIS. Residue cysteine 30 is the site of N-palmitoyl cysteine attachment. Cysteine 30 carries S-diacylglycerol cysteine lipidation. Residues 33–168 form a disordered region; the sequence is TNTDQSQQPG…STSTSNMNTR (136 aa). Low complexity-rich tracts occupy residues 35–44 and 52–71; these read TDQSQQPGSG and GTTT…ESGT. The span at 72–81 shows a compositional bias: gly residues; sequence TTGGQTGTTT. Tandem repeats lie at residues 81 to 92, 93 to 104, 105 to 116, 117 to 128, 129 to 140, 141 to 152, and 153 to 164. The segment at 81-164 is 7 X 12 AA tandem repeats; sequence TGGQSDSTST…GSSDSTSTSN (84 aa). Low complexity predominate over residues 82 to 168; it reads GGQSDSTSTS…STSTSNMNTR (87 aa).

Its subcellular location is the cell membrane. Functionally, responsible for the antigenic diversity for host adaptation. Expression in E.coli of a construct containing vlpD, vlpE, and vlpF yields antigenically distinguishable products corresponding to each gene. This chain is Variant surface antigen D (vlpD), found in Mesomycoplasma hyorhinis (Mycoplasma hyorhinis).